Here is an 87-residue protein sequence, read N- to C-terminus: Large ribosomal subunit protein bL27 (87 aa).

This sequence belongs to the bacterial ribosomal protein bL27 family.

This chain is Large ribosomal subunit protein bL27, found in Dechloromonas aromatica (strain RCB).